The primary structure comprises 337 residues: Probable cytosolic iron-sulfur protein assembly protein CIAO1 homolog (337 aa).

WD repeat units lie at residues 15–54, 65–104, 109–148, 154–193, 199–238, 253–292, and 301–337; these read DDTSRVWMTCWHHGGRILASCGDDKAVRVWSLVGEPDSKM, SHTRAVRSVAFSNDGKCLVSASFDASVVVYQQEDGEFAEV, GHESEVKCAVFSKSDEFLATCSRDKSVWFWQQDEDEDFSV, PHTQDVKQVAWHPTEDLLVSCSYDSSIRFYRFDGEDWVTQ, CHVGTVWSIAFDTEGHRLVTVGEDHCIQLFVRENIGSKSA, NTRWPLYSVAWNSTNDVIATGGGDCKIRLFKISSTPESPV, and RHELDVNHVAWNPNPKFSNLLTSASDDGTIRLWELEI.

The protein belongs to the WD repeat CIA1 family.

In terms of biological role, essential component of the cytosolic iron-sulfur (Fe/S) protein assembly machinery. Required for the maturation of extramitochondrial Fe/S proteins. In Caenorhabditis elegans, this protein is Probable cytosolic iron-sulfur protein assembly protein CIAO1 homolog.